The primary structure comprises 331 residues: Cytosolic sulfotransferase 1 (331 aa).

Lysine 74–tryptophan 79 provides a ligand contact to 3'-phosphoadenylyl sulfate. The Proton acceptor role is filled by histidine 143. Residues arginine 165, serine 173, tyrosine 231, and arginine 297–glycine 299 each bind 3'-phosphoadenylyl sulfate.

Belongs to the sulfotransferase 1 family.

The protein resides in the cytoplasm. Its function is as follows. Sulfotransferase that utilizes 3'-phospho-5'-adenylyl sulfate (PAPS) as sulfonate donor. The polypeptide is Cytosolic sulfotransferase 1 (SOT1) (Arabidopsis thaliana (Mouse-ear cress)).